A 390-amino-acid polypeptide reads, in one-letter code: Tumor susceptibility gene 101 protein (390 aa).

Ala2 carries the post-translational modification N-acetylalanine. One can recognise a UEV domain in the interval 2–145; it reads AVSESQLKKM…GDEPPVFSRP (144 aa). The tract at residues 158 to 162 is interaction with CEP55; that stretch reads PPNTS. The span at 198-214 shows a compositional bias: polar residues; it reads ATTSSQYPSQPPVTTVG. Residues 198–220 form a disordered region; sequence ATTSSQYPSQPPVTTVGPSRDGT. Phosphothreonine is present on Thr220. A coiled-coil region spans residues 235-316; it reads SDKLRWRMKE…NQSENNDIDE (82 aa). Residues 320–323 carry the PTAP motif motif; it reads PTAP. Residues 322–390 enclose the SB domain; that stretch reads APLYKQILNL…RKTAGLSDLY (69 aa).

It belongs to the ubiquitin-conjugating enzyme family. UEV subfamily. As to quaternary structure, component of the ESCRT-I complex (endosomal sorting complex required for transport I) which consists of TSG101, VPS28, a VPS37 protein (VPS37A to -D) and MVB12A or MVB12B in a 1:1:1:1 stoichiometry. Interacts with VPS37A, VPS37B and VPS37C. Interacts with DMAP1. Interacts with ubiquitin. Interacts with stathmin, GMCL and AATF. Component of an ESCRT-I complex (endosomal sorting complex required for transport I) which consists of TSG101, VPS28, VPS37A and UBAP1 in a 1:1:1:1 stoichiometry. Interacts with HGS; the interaction mediates the association with the ESCRT-0 complex. Interacts with GGA1 and GGA3. Interacts (via UEV domain) with PDCD6IP/AIP1. Interacts with VPS28, SNF8 and VPS36. Self-associates. Interacts with MVB12A; the association appears to be mediated by the TSG101-VPS37 binary subcomplex. Interacts with VPS37D. Interacts with LRSAM1. Interacts with CEP55; the interaction is required for cytokinesis but not for viral budding. Interacts with PDCD6. Interacts with LITAF. Interacts with MGRN1. Interacts with ARRDC1; recruits TSG101 to the plasma membrane. (Microbial infection) Interacts with HIV-1 p6. In terms of assembly, (Microbial infection) Interacts with human spumavirus Gag. As to quaternary structure, (Microbial infection) Interacts with HTLV-1 Gag. (Microbial infection) Interacts with Ebola virus VP40. In terms of assembly, (Microbial infection) Interacts with EIAV p9; the interaction has been shown in vitro. As to quaternary structure, (Microbial infection) Interacts with Lassa virus protein Z. (Microbial infection) Interacts with hepatitis E virus protein ORF3. Monoubiquitinated at multiple sites by LRSAM1 and by MGRN1. Ubiquitination inactivates it, possibly by regulating its shuttling between an active membrane-bound protein and an inactive soluble form. Ubiquitination by MGRN1 requires the presence of UBE2D1. Heart, brain, placenta, lung, liver, skeletal, kidney and pancreas.

It localises to the cytoplasm. It is found in the early endosome membrane. The protein localises to the late endosome membrane. Its subcellular location is the cytoskeleton. The protein resides in the microtubule organizing center. It localises to the centrosome. It is found in the midbody. The protein localises to the midbody ring. Its subcellular location is the nucleus. Component of the ESCRT-I complex, a regulator of vesicular trafficking process. Binds to ubiquitinated cargo proteins and is required for the sorting of endocytic ubiquitinated cargos into multivesicular bodies (MVBs). Mediates the association between the ESCRT-0 and ESCRT-I complex. Required for completion of cytokinesis; the function requires CEP55. May be involved in cell growth and differentiation. Acts as a negative growth regulator. Involved in the budding of many viruses through an interaction with viral proteins that contain a late-budding motif P-[ST]-A-P. This interaction is essential for viral particle budding of numerous retroviruses. Required for the exosomal release of SDCBP, CD63 and syndecan. It may also play a role in the extracellular release of microvesicles that differ from the exosomes. The protein is Tumor susceptibility gene 101 protein (TSG101) of Homo sapiens (Human).